The sequence spans 199 residues: Inner membrane-spanning protein YciB (199 aa).

5 helical membrane passes run 3 to 23, 47 to 67, 76 to 96, 119 to 139, and 149 to 169; these read LLIDFFPIILFFVAFKVWGIY, VEPMQWVSLGVIVLFGGATLL, WKPSVLYWLMGSALLIGQLVF, LNWSWAAFFAVMGALNLVIAY, and FKLFGGMGLMLVFVIGQAIYM. The disordered stretch occupies residues 180-199; it reads AAAATPDALPPPGVQQDKQP.

It belongs to the YciB family.

The protein localises to the cell inner membrane. Functionally, plays a role in cell envelope biogenesis, maintenance of cell envelope integrity and membrane homeostasis. The chain is Inner membrane-spanning protein YciB from Delftia acidovorans (strain DSM 14801 / SPH-1).